Reading from the N-terminus, the 640-residue chain is Dextranase (640 aa).

An N-terminal signal peptide occupies residues 1–32 (MPGTGLGRLAKHVTAAAAVFLISTGAVLPAQA).

Belongs to the glycosyl hydrolase 49 family.

It localises to the secreted. The catalysed reaction is Endohydrolysis of (1-&gt;6)-alpha-D-glucosidic linkages in dextran.. The polypeptide is Dextranase (Arthrobacter globiformis).